A 1364-amino-acid chain; its full sequence is DNA-directed RNA polymerase subunit beta (1364 aa).

It belongs to the RNA polymerase beta chain family. In terms of assembly, the RNAP catalytic core consists of 2 alpha, 1 beta, 1 beta' and 1 omega subunit. When a sigma factor is associated with the core the holoenzyme is formed, which can initiate transcription.

The catalysed reaction is RNA(n) + a ribonucleoside 5'-triphosphate = RNA(n+1) + diphosphate. Its function is as follows. DNA-dependent RNA polymerase catalyzes the transcription of DNA into RNA using the four ribonucleoside triphosphates as substrates. The sequence is that of DNA-directed RNA polymerase subunit beta from Desulfatibacillum aliphaticivorans.